A 476-amino-acid polypeptide reads, in one-letter code: MNNAVKEQLAELGIEGYLNQHQHKSLLRFLTCGSVDDGKSTLIGRLLHDSKQIYEDQLAAVHNDSQRVGTTGSRPDLALLVDGLQAEREQGITIDVAYRYFSTQKRKFIIADTPGHEQYTRNMATGASTCDLAVILIDARKGVLDQTRRHSFISNLLGLKHFIVAVNKMDLVDYSQDRFEQIRAEYLEFSKHLQGETEIQIIPLSALEGDNVVEKSRLMDWYQGPSLLELLEYVDIDRDKSSGAFRFPVQYVNRPNLDFRGFAGTIASGVVKVGDKIKALPSGKTSTVTRIVTFDGDLPQAQAGLAVTLTLADEIDISRGDLIVLESAQVDSTNHLLADVVWMTEQPLQVGRDYDIKIAGKKTVGQVKAVRHQYDINNLSTYHAESLPLNGIGLCEWTFTQTVALDKYLDCADTGGFIIIDRLTNVTVGAGLVRDSLQNITGQTESFSAFELELNALVRKHFPHWQAIDLSRLGKA.

In terms of domain architecture, tr-type G spans 24–238 (KSLLRFLTCG…ELLEYVDIDR (215 aa)). Residues 33–40 (GSVDDGKS) are G1. 33-40 (GSVDDGKS) serves as a coordination point for GTP. Residues 91 to 95 (GITID) form a G2 region. The tract at residues 112-115 (DTPG) is G3. GTP is bound by residues 112 to 116 (DTPGH) and 167 to 170 (NKMD). Positions 167–170 (NKMD) are G4. Residues 205-207 (SAL) form a G5 region.

Belongs to the TRAFAC class translation factor GTPase superfamily. Classic translation factor GTPase family. CysN/NodQ subfamily. As to quaternary structure, heterodimer composed of CysD, the smaller subunit, and CysN.

It carries out the reaction sulfate + ATP + H(+) = adenosine 5'-phosphosulfate + diphosphate. The protein operates within sulfur metabolism; hydrogen sulfide biosynthesis; sulfite from sulfate: step 1/3. Its function is as follows. With CysD forms the ATP sulfurylase (ATPS) that catalyzes the adenylation of sulfate producing adenosine 5'-phosphosulfate (APS) and diphosphate, the first enzymatic step in sulfur assimilation pathway. APS synthesis involves the formation of a high-energy phosphoric-sulfuric acid anhydride bond driven by GTP hydrolysis by CysN coupled to ATP hydrolysis by CysD. This chain is Sulfate adenylyltransferase subunit 1, found in Vibrio cholerae serotype O1 (strain M66-2).